A 1450-amino-acid polypeptide reads, in one-letter code: DNA-directed RNA polymerase RPB1 homolog (1450 aa).

This sequence belongs to the RNA polymerase beta' chain family. Part of the viral DNA-directed RNA polymerase that consists of 8 polII-like subunits (RPB1, RPB2, RPB3, RPB5, RPB6, RPB7, RPB9, RPB10), a capping enzyme and a termination factor.

It localises to the virion. The enzyme catalyses RNA(n) + a ribonucleoside 5'-triphosphate = RNA(n+1) + diphosphate. In terms of biological role, catalytic component of the DNA-directed RNA polymerase (RNAP) that catalyzes the transcription in the cytoplasm of viral DNA into RNA using the four ribonucleoside triphosphates as substrates. Forms the polymerase active center together with RPB2. Part of the core element with the central large cleft, the clamp element that moves to open and close the cleft and the jaws that are thought to grab the incoming DNA template. The sequence is that of DNA-directed RNA polymerase RPB1 homolog from African swine fever virus (isolate Warthog/Namibia/Wart80/1980) (ASFV).